The sequence spans 195 residues: ATP-dependent Clp protease proteolytic subunit (195 aa).

Catalysis depends on Ser-97, which acts as the Nucleophile. His-122 is an active-site residue.

Belongs to the peptidase S14 family. In terms of assembly, fourteen ClpP subunits assemble into 2 heptameric rings which stack back to back to give a disk-like structure with a central cavity, resembling the structure of eukaryotic proteasomes.

The protein localises to the cytoplasm. It catalyses the reaction Hydrolysis of proteins to small peptides in the presence of ATP and magnesium. alpha-casein is the usual test substrate. In the absence of ATP, only oligopeptides shorter than five residues are hydrolyzed (such as succinyl-Leu-Tyr-|-NHMec, and Leu-Tyr-Leu-|-Tyr-Trp, in which cleavage of the -Tyr-|-Leu- and -Tyr-|-Trp bonds also occurs).. Functionally, cleaves peptides in various proteins in a process that requires ATP hydrolysis. Has a chymotrypsin-like activity. Plays a major role in the degradation of misfolded proteins. The sequence is that of ATP-dependent Clp protease proteolytic subunit from Campylobacter hominis (strain ATCC BAA-381 / DSM 21671 / CCUG 45161 / LMG 19568 / NCTC 13146 / CH001A).